The following is a 268-amino-acid chain: Probable ribosomal RNA small subunit methyltransferase A (268 aa).

6 residues coordinate S-adenosyl-L-methionine: His-23, Leu-25, Gly-50, Glu-71, Asp-95, and Asn-110.

It belongs to the class I-like SAM-binding methyltransferase superfamily. rRNA adenine N(6)-methyltransferase family. RsmA subfamily.

Its subcellular location is the cytoplasm. Specifically dimethylates two adjacent adenosines in the loop of a conserved hairpin near the 3'-end of 16S rRNA in the 30S particle. May play a critical role in biogenesis of 30S subunits. The polypeptide is Probable ribosomal RNA small subunit methyltransferase A (Pyrococcus horikoshii (strain ATCC 700860 / DSM 12428 / JCM 9974 / NBRC 100139 / OT-3)).